The sequence spans 154 residues: Putative nickel-responsive regulator (154 aa).

Ni(2+)-binding residues include H95, H106, H108, and C114.

Belongs to the transcriptional regulatory CopG/NikR family. Ni(2+) serves as cofactor.

Functionally, transcriptional regulator. In Caldanaerobacter subterraneus subsp. tengcongensis (strain DSM 15242 / JCM 11007 / NBRC 100824 / MB4) (Thermoanaerobacter tengcongensis), this protein is Putative nickel-responsive regulator.